The following is a 163-amino-acid chain: Lipoprotein signal peptidase (163 aa).

Helical transmembrane passes span 3–23, 70–90, and 94–114; these read IPLI…IIIL, NYIL…TMYN, and IENF…IGNF. Residues D125 and D143 contribute to the active site. Residues 134-154 form a helical membrane-spanning segment; that stretch reads WHFATFNIADVSIFIGSVLFI.

Belongs to the peptidase A8 family.

It localises to the cell membrane. The enzyme catalyses Release of signal peptides from bacterial membrane prolipoproteins. Hydrolyzes -Xaa-Yaa-Zaa-|-(S,diacylglyceryl)Cys-, in which Xaa is hydrophobic (preferably Leu), and Yaa (Ala or Ser) and Zaa (Gly or Ala) have small, neutral side chains.. It participates in protein modification; lipoprotein biosynthesis (signal peptide cleavage). Functionally, this protein specifically catalyzes the removal of signal peptides from prolipoproteins. This Buchnera aphidicola subsp. Baizongia pistaciae (strain Bp) protein is Lipoprotein signal peptidase.